Here is a 931-residue protein sequence, read N- to C-terminus: Adhesion G protein-coupled receptor E1 (931 aa).

An N-terminal signal peptide occupies residues 1–27 (MWGFWLLLFWGFSGMYRWGMTTLPTLG). Over 28 to 644 (QTLGGVNECQ…IMASGELTME (617 aa)) the chain is Extracellular. 2 consecutive EGF-like domains span residues 32–80 (GVNE…VECQ) and 81–132 (DVNE…FLCA). 21 cysteine pairs are disulfide-bonded: Cys-36–Cys-48, Cys-42–Cys-57, Cys-59–Cys-79, Cys-85–Cys-98, Cys-92–Cys-107, Cys-109–Cys-131, Cys-137–Cys-149, Cys-143–Cys-158, Cys-160–Cys-171, Cys-177–Cys-189, Cys-183–Cys-198, Cys-200–Cys-220, Cys-226–Cys-239, Cys-233–Cys-248, Cys-250–Cys-270, Cys-276–Cys-286, Cys-280–Cys-295, Cys-297–Cys-317, Cys-323–Cys-336, Cys-330–Cys-345, and Cys-347–Cys-366. The EGF-like 3; calcium-binding domain occupies 133–172 (DVDECLTIGICPKYSNCSNSVGSYSCTCQPGFVLNGSICE). 2 N-linked (GlcNAc...) asparagine glycosylation sites follow: Asn-148 and Asn-167. An EGF-like 4; calcium-binding domain is found at 173 to 221 (DEDECVTRDVCPEHATCHNTLGSYYCTCNSGLESSGGGPMFQGLDESCE). Positions 222–271 (DVDECSRNSTLCGPTFICINTLGSYSCSCPAGFSLPTFQILGHPADGNCT) constitute an EGF-like 5; calcium-binding domain. N-linked (GlcNAc...) asparagine glycosylation occurs at Asn-229. 2 N-linked (GlcNAc...) asparagine glycosylation sites follow: Asn-269 and Asn-283. Residues 272-318 (DIDECDDTCPLNSSCTNTIGSYFCTCHPGFASSNGQLNFKDLEVTCE) form the EGF-like 6; calcium-binding domain. The 49-residue stretch at 319–367 (DIDECTQDPLQCGLNSVCTNVPGSYICGCLPDFQMDPEGSQGYGNFNCK) folds into the EGF-like 7; calcium-binding domain. 4 N-linked (GlcNAc...) asparagine glycosylation sites follow: Asn-405, Asn-417, Asn-474, and Asn-498. One can recognise a GAIN-B domain in the interval 482–642 (EYLDIESKVI…AIIMASGELT (161 aa)). The Cell attachment site signature appears at 506–508 (RGD). Disulfide bonds link Cys-595-Cys-624 and Cys-612-Cys-626. Residues 595 to 642 (CVSWNTDVEDGRWTPSGCEIVEASETHTVCSCNRMANLAIIMASGELT) form a GPS region. A helical transmembrane segment spans residues 645 to 672 (FSLYIISHVGTVISLVCLALAIATFLLC). The Cytoplasmic segment spans residues 673–679 (RAVQNHN). A helical transmembrane segment spans residues 680–701 (TYMHLHLCVCLFLAKILFLTGI). Residues 702-711 (DKTDNQTACA) are Extracellular-facing. Asn-706 is a glycosylation site (N-linked (GlcNAc...) asparagine). Residues 712–735 (IIAGFLHYLFLACFFWMLVEAVML) traverse the membrane as a helical segment. The Cytoplasmic portion of the chain corresponds to 736-754 (FLMVRNLKVVNYFSSRNIK). Residues 755–776 (MLHLCAFGYGLPVLVVIISASV) form a helical membrane-spanning segment. At 777–792 (QPRGYGMHNRCWLNTE) the chain is on the extracellular side. A helical transmembrane segment spans residues 793 to 821 (TGFIWSFLGPVCMIITINSVLLAWTLWVL). The Cytoplasmic portion of the chain corresponds to 822-839 (RQKLCSVSSEVSKLKDTR). A helical membrane pass occupies residues 840-859 (LLTFKAIAQIFILGCSWVLG). The Extracellular portion of the chain corresponds to 860–874 (IFQIGPLASIMAYLF). The chain crosses the membrane as a helical span at residues 875–897 (TIINSLQGAFIFLIHCLLNRQVR). Topologically, residues 898–931 (DEYKKLLTRKTDLSSHSQTSGILLSSMPSTSKMG) are cytoplasmic.

The protein belongs to the G-protein coupled receptor 2 family. Adhesion G-protein coupled receptor (ADGR) subfamily. In macrophages; but absent from those which are localized within T-cell areas of lymph nodes and spleen. Low level of expression on blood monocytes.

It is found in the cell membrane. Functionally, orphan receptor involved in cell adhesion and probably in cell-cell interactions specifically involving cells of the immune system. May play a role in regulatory T-cells (Treg) development. This Mus musculus (Mouse) protein is Adhesion G protein-coupled receptor E1 (Adgre1).